Consider the following 442-residue polypeptide: Vacuolar zinc transporter ZRC1 (442 aa).

Over Met-1–Arg-8 the chain is Cytoplasmic. A helical membrane pass occupies residues Ile-9–Met-29. Over Ser-30–Ser-32 the chain is Vacuolar. Residues Leu-33 to Leu-53 traverse the membrane as a helical segment. Topologically, residues Trp-54–Ala-75 are cytoplasmic. A helical membrane pass occupies residues Glu-76–Ile-96. The Vacuolar portion of the chain corresponds to Glu-97–Arg-112. A helical transmembrane segment spans residues Leu-113–His-133. Residues Asp-134 to Val-235 lie on the Cytoplasmic side of the membrane. 3 consecutive short sequence motifs (histidine repeat) follow at residues His-141–His-145, His-163–His-167, and His-216–His-220. 2 disordered regions span residues His-141 to Leu-170 and Gln-208 to His-227. The span at Glu-149–Leu-170 shows a compositional bias: polar residues. A compositionally biased stretch (basic and acidic residues) spans Asn-212 to Lys-224. Residues Phe-236 to Ile-256 form a helical membrane-spanning segment. Over Trp-257 to Tyr-265 the chain is Vacuolar. Residues Tyr-266–Leu-286 form a helical membrane-spanning segment. Topologically, residues Ser-287 to Leu-442 are cytoplasmic. Residue Lys-357 forms a Glycyl lysine isopeptide (Lys-Gly) (interchain with G-Cter in ubiquitin) linkage. A phosphoserine mark is found at Ser-387, Ser-393, and Ser-397. The interval Gly-391–Tyr-419 is disordered.

This sequence belongs to the cation diffusion facilitator (CDF) transporter (TC 2.A.4) family. SLC30A subfamily.

The protein localises to the vacuole membrane. The catalysed reaction is Zn(2+)(in) = Zn(2+)(out). Functionally, vacuolar transporter that regulates zinc homeostasis by mediating zinc transport and storage into the vacuole. ZRC1 senses zinc availability in the cytosol, which might be performed through the histidine repeat motifs, and transports zinc from the cytosol to the vacuole if zinc in cytosol is abundant, conferring resistance to zinc toxicity. Plays a role in resistance to zinc shock resulting from sudden influx of zinc into cytoplasm when ZRT1 and ZRT2 are induced in response to zinc depletion. This Saccharomyces cerevisiae (strain ATCC 204508 / S288c) (Baker's yeast) protein is Vacuolar zinc transporter ZRC1.